The sequence spans 107 residues: Replication initiation control protein YabA (107 aa).

Zn(2+)-binding residues include H81, C83, C97, and C100.

The protein belongs to the YabA family. In terms of assembly, homotetramer. Interacts with both DnaA and DnaN, acting as a bridge between these two proteins. The cofactor is Zn(2+).

It localises to the cytoplasm. It is found in the nucleoid. In terms of biological role, involved in control of chromosome replication initiation. Inhibits the cooperative binding of DnaA to the oriC region, thus negatively regulating initiation of chromosome replication. Inhibits the ability of DnaA-ATP to form a helix on DNA; does not disassemble preformed DnaA-DNA helices. Decreases the residence time of DnaA on the chromosome at its binding sites (oriC, replication forks and promoter-binding sites). Tethers DnaA to the replication machinery via the DNA polymerase beta sliding clamp subunit (dnaN). Associates with oriC and other DnaA targets on the chromosome in a DnaA-dependent manner. This is Replication initiation control protein YabA from Streptococcus pyogenes serotype M1.